A 340-amino-acid chain; its full sequence is Entry-fusion complex protein OPG094 (340 aa).

The segment at 1 to 20 (MGGGVSVELPKRDPPPGVPT) is disordered. A lipid anchor (N-myristoyl glycine; by host) is attached at glycine 2. The Virion surface portion of the chain corresponds to 2–319 (GGGVSVELPK…VQHNIKHSFD (318 aa)). Residues 320–340 (LKLHLISLLSLLVIWILIVAI) traverse the membrane as a helical; Signal-anchor for type II membrane protein segment.

It belongs to the orthopoxvirus OPG086 family. Interacts with OPG143. Component of the entry fusion complex (EFC) composed of OPG053, OPG076, OPG086, OPG094, OPG095, OPG099, OPG107, OPG143, OPG104, OPG147 and OPG155. Except for OPG095 and OPG053, each of the EFC proteins is required for assembly or stability of the complex. Post-translationally, unglycosylated because produced in viral factories instead of the classic ER -Golgi route.

The protein localises to the virion membrane. Functionally, component of the entry fusion complex (EFC), which consists of 11 proteins. During cell infection, this complex mediates entry of the virion core into the host cytoplasm by a two-step mechanism consisting of lipid mixing of the viral and cellular membranes and subsequent pore formation. This chain is Entry-fusion complex protein OPG094 (OPG094), found in Variola virus.